Here is a 166-residue protein sequence, read N- to C-terminus: Putative 4-hydroxy-4-methyl-2-oxoglutarate aldolase (166 aa).

Substrate is bound by residues 81–84 and Arg-103; that span reads GDII. Residue Asp-104 coordinates a divalent metal cation.

It belongs to the class II aldolase/RraA-like family. As to quaternary structure, homotrimer. Requires a divalent metal cation as cofactor.

The catalysed reaction is 4-hydroxy-4-methyl-2-oxoglutarate = 2 pyruvate. The enzyme catalyses oxaloacetate + H(+) = pyruvate + CO2. Catalyzes the aldol cleavage of 4-hydroxy-4-methyl-2-oxoglutarate (HMG) into 2 molecules of pyruvate. Also contains a secondary oxaloacetate (OAA) decarboxylase activity due to the common pyruvate enolate transition state formed following C-C bond cleavage in the retro-aldol and decarboxylation reactions. In Corynebacterium glutamicum (strain ATCC 13032 / DSM 20300 / JCM 1318 / BCRC 11384 / CCUG 27702 / LMG 3730 / NBRC 12168 / NCIMB 10025 / NRRL B-2784 / 534), this protein is Putative 4-hydroxy-4-methyl-2-oxoglutarate aldolase.